The chain runs to 424 residues: UDP-sugar transporter protein SLC35A5 (424 aa).

Residues 1 to 8 (MEKQCCSH) lie on the Cytoplasmic side of the membrane. The helical transmembrane segment at 9 to 29 (PVICSLSTMYTFLLGAIFIAL) threads the bilayer. At 30–53 (SSSRILLVKYSANEENKYDYLPTT) the chain is on the lumenal side. The chain crosses the membrane as a helical span at residues 54 to 74 (ANVCSELVKLVFCVLVSFCVI). At 75-93 (KKDHQSRNLKYASWKEFSN) the chain is on the cytoplasmic side. A helical membrane pass occupies residues 94–116 (FMKWSIPAFLYFLDNLIVFYVLS). Residues 117 to 119 (YLQ) lie on the Lumenal side of the membrane. The helical transmembrane segment at 120–142 (PAMAVIFSNFSIITTALLFRIVL) threads the bilayer. The Cytoplasmic segment spans residues 143–147 (KRRLN). A helical membrane pass occupies residues 148-168 (WIQWASLLILFLSIVALTAGT). Residues 169–228 (KTLQHNLAGHGFHHDAFFSPSNSCLLFRSECPRKDNCTAKEWTFPEAKWNTTARVFSHIR) are Lumenal-facing. The N-linked (GlcNAc...) asparagine glycan is linked to Asn-204. The chain crosses the membrane as a helical span at residues 229 to 249 (LGMGHVLIIVQCFISSMANIY). Residues 250 to 263 (NEKILKEGNQLAES) lie on the Cytoplasmic side of the membrane. Residues 264-284 (IFIQNSKLYFFGILFNGLTLG) form a helical membrane-spanning segment. The Lumenal portion of the chain corresponds to 285–303 (LQRSNRDQIKNCGFFYGHN). Residues 304–324 (AFSVALIFVTAFQGLSVAFIL) traverse the membrane as a helical segment. The Cytoplasmic segment spans residues 325–330 (KFLDNM). Residues 331–351 (FHVLMAQVTTVIITTVSVLVF) form a helical membrane-spanning segment. Topologically, residues 352 to 354 (DFR) are lumenal. Residues 355–375 (PSLEFFLEAPSVLLSIFIYNA) form a helical membrane-spanning segment. Topologically, residues 376–424 (SKPQGPEYAPRQERIRDLSGNLWERSSGDGEELERLTKPKSDESDEDTF) are cytoplasmic. A phosphoserine mark is found at Ser-394, Ser-416, and Ser-419. The interval 395–424 (GNLWERSSGDGEELERLTKPKSDESDEDTF) is disordered. Residues 408 to 417 (LERLTKPKSD) are compositionally biased toward basic and acidic residues.

This sequence belongs to the nucleotide-sugar transporter family. SLC35A subfamily. In terms of assembly, probably forms homooligomers and heterooligomers with SLC35A1, SLC35A2, SLC35A3 and SLC35A4.

It is found in the golgi apparatus membrane. The catalysed reaction is UMP(out) + UDP-alpha-D-glucuronate(in) = UMP(in) + UDP-alpha-D-glucuronate(out). It carries out the reaction UMP(out) + UDP-N-acetyl-alpha-D-glucosamine(in) = UMP(in) + UDP-N-acetyl-alpha-D-glucosamine(out). The enzyme catalyses UDP-N-acetyl-alpha-D-galactosamine(in) + UMP(out) = UDP-N-acetyl-alpha-D-galactosamine(out) + UMP(in). Its function is as follows. Probable UDP-sugar:UMP transmembrane antiporter involved in UDP-alpha-D-glucuronate/UDP-GlcA, UDP-GlcNAc/UDP-N-acetyl-alpha-D-glucosamine and UDP-N-acetyl-alpha-D-galactosamine/UDP-GalNAc transport from the cytosol to the lumen of the Golgi. The polypeptide is UDP-sugar transporter protein SLC35A5 (Pongo abelii (Sumatran orangutan)).